The following is a 184-amino-acid chain: Protein Iojap-related, mitochondrial (184 aa).

The transit peptide at 1 to 39 directs the protein to the mitochondrion; the sequence is MLTTLRSRCSSLLLNQSWKLAPNRIFASSPSFSSSAGIS.

This sequence belongs to the Iojap/RsfS family.

The protein resides in the mitochondrion. Functionally, may be a ribosome silencing factor involved in organelle biogenesis and required for germination. In Arabidopsis thaliana (Mouse-ear cress), this protein is Protein Iojap-related, mitochondrial.